Reading from the N-terminus, the 555-residue chain is Formate--tetrahydrofolate ligase (555 aa).

65–72 (TPAGEGKT) provides a ligand contact to ATP.

This sequence belongs to the formate--tetrahydrofolate ligase family.

The catalysed reaction is (6S)-5,6,7,8-tetrahydrofolate + formate + ATP = (6R)-10-formyltetrahydrofolate + ADP + phosphate. Its pathway is one-carbon metabolism; tetrahydrofolate interconversion. The polypeptide is Formate--tetrahydrofolate ligase (Thermoanaerobacter sp. (strain X514)).